Consider the following 153-residue polypeptide: MAELDRIDLKILRALADDGRLSWRDLAQKVGLSLTPTLRRVRRLEEEHYIQGYFARLDEERLSGAMSVFVSVSLEKQTGDYLARFEERIVDAPQVMSCFQMTGDADYMLRVVVKDLAAYQAFLTNTLTCIPGVAGIKSAFALKSVMLRSAPPL.

In terms of domain architecture, HTH asnC-type spans 4-65 (LDRIDLKILR…RLDEERLSGA (62 aa)). The segment at residues 23 to 42 (WRDLAQKVGLSLTPTLRRVR) is a DNA-binding region (H-T-H motif).

Its function is as follows. Positive regulator of the bkd operon for branched-chain keto acid dehydrogenase complex. The protein is Bkd operon transcriptional regulator (bkdR) of Pseudomonas aeruginosa (strain ATCC 15692 / DSM 22644 / CIP 104116 / JCM 14847 / LMG 12228 / 1C / PRS 101 / PAO1).